We begin with the raw amino-acid sequence, 667 residues long: Beta-galactosidase LacZ (667 aa).

Arginine 109 serves as a coordination point for substrate. Cysteine 113 is a binding site for Zn(2+). Asparagine 147 is a substrate binding site. Glutamate 148 acts as the Proton donor in catalysis. 3 residues coordinate Zn(2+): cysteine 153, cysteine 155, and cysteine 158. Glutamate 307 (nucleophile) is an active-site residue. Residues tryptophan 315 and 355-358 each bind substrate; that span reads EKFH.

Belongs to the glycosyl hydrolase 42 family.

The enzyme catalyses Hydrolysis of terminal non-reducing beta-D-galactose residues in beta-D-galactosides.. Its function is as follows. Catalyzes the hydrolysis of lactose to its constituent monosaccharides glucose and galactose. The chain is Beta-galactosidase LacZ from Lactobacillus acidophilus (strain ATCC 700396 / NCK56 / N2 / NCFM).